Reading from the N-terminus, the 393-residue chain is DNA primase large subunit PriL (393 aa).

[4Fe-4S] cluster contacts are provided by Cys230, Cys339, Cys350, and Cys356.

The protein belongs to the eukaryotic-type primase large subunit family. Heterodimer of a small subunit (PriS) and a large subunit (PriL). Requires [4Fe-4S] cluster as cofactor.

Regulatory subunit of DNA primase, an RNA polymerase that catalyzes the synthesis of short RNA molecules used as primers for DNA polymerase during DNA replication. Stabilizes and modulates the activity of the small subunit, increasing the rate of DNA synthesis, and conferring RNA synthesis capability. The DNA polymerase activity may enable DNA primase to also catalyze primer extension after primer synthesis. May also play a role in DNA repair. Displays gap-filling and strand-displacement activities. The polypeptide is DNA primase large subunit PriL (Pyrococcus abyssi (strain GE5 / Orsay)).